The chain runs to 494 residues: UDP-N-acetylmuramate--L-alanine ligase (494 aa).

Position 122 to 128 (122 to 128) interacts with ATP; that stretch reads GTHGKTT.

This sequence belongs to the MurCDEF family.

The protein localises to the cytoplasm. It carries out the reaction UDP-N-acetyl-alpha-D-muramate + L-alanine + ATP = UDP-N-acetyl-alpha-D-muramoyl-L-alanine + ADP + phosphate + H(+). The protein operates within cell wall biogenesis; peptidoglycan biosynthesis. Cell wall formation. In Mycobacterium bovis (strain ATCC BAA-935 / AF2122/97), this protein is UDP-N-acetylmuramate--L-alanine ligase.